Reading from the N-terminus, the 142-residue chain is Metallothiol transferase FosB (142 aa).

The region spanning 5-120 (NVNHICFSVS…DGHKIELHTG (116 aa)) is the VOC domain. Residues H8, H67, and E116 each contribute to the Mg(2+) site. E116 (proton donor/acceptor) is an active-site residue.

This sequence belongs to the fosfomycin resistance protein family. FosB subfamily. Homodimer. Mg(2+) is required as a cofactor.

It is found in the cytoplasm. Functionally, metallothiol transferase which confers resistance to fosfomycin by catalyzing the addition of a thiol cofactor to fosfomycin. L-cysteine is probably the physiological thiol donor. This is Metallothiol transferase FosB from Staphylococcus epidermidis (strain ATCC 35984 / DSM 28319 / BCRC 17069 / CCUG 31568 / BM 3577 / RP62A).